The following is a 113-amino-acid chain: Cell cycle protein GpsB (113 aa).

Residues 36–65 adopt a coiled-coil conformation; sequence IKDYETYAALVKSLRQEIADLKEELARKPQ. The disordered stretch occupies residues 61 to 82; sequence ARKPQVSSAPSPSHPDPIDVAA.

It belongs to the GpsB family. Forms polymers through the coiled coil domains. Interacts with PBP1, MreC and EzrA.

It localises to the cytoplasm. Functionally, divisome component that associates with the complex late in its assembly, after the Z-ring is formed, and is dependent on DivIC and PBP2B for its recruitment to the divisome. Together with EzrA, is a key component of the system that regulates PBP1 localization during cell cycle progression. Its main role could be the removal of PBP1 from the cell pole after pole maturation is completed. Also contributes to the recruitment of PBP1 to the division complex. Not essential for septum formation. This is Cell cycle protein GpsB from Streptococcus pneumoniae (strain Hungary19A-6).